We begin with the raw amino-acid sequence, 386 residues long: Benzoyl-CoA reductase subunit C (386 aa).

Belongs to the FldB/FldC dehydratase alpha/beta subunit family. Heterotetramer composed of A, B, C, and D subunits. Requires iron-sulfur cluster as cofactor. The cofactor is an oxidized flavin.

It carries out the reaction cyclohexa-1,5-diene-1-carbonyl-CoA + oxidized 2[4Fe-4S]-[ferredoxin] + 2 ADP + 2 phosphate = reduced 2[4Fe-4S]-[ferredoxin] + benzoyl-CoA + 2 ATP + 2 H2O. It catalyses the reaction 3-hydroxybenzoyl-CoA + AH2 + 2 ATP + 2 H2O = 3-hydroxycyclohexa-1,5-diene-1-carbonyl-CoA + A + 2 ADP + 2 phosphate + 2 H(+). Functionally, catalyzes the anaerobic reduction of benzoyl-CoA and 3-hydroxybenzoyl-CoA to form cyclohexa-1,5-diene-1-carbonyl-CoA and 3-hydroxycyclohexa-1,5-diene-1-carbonyl-CoA, respectively. The enzyme also reduces other benzoyl-CoA analogs with small substituents at the aromatic ring. The polypeptide is Benzoyl-CoA reductase subunit C (bcrC) (Thauera aromatica).